A 269-amino-acid chain; its full sequence is MTESEKRKSRITTRTLQRMRDRGERITMLTAYDFPTAKILDEAGVDVLLVGDTVGMVVQGHSTTLPVTMDQMIYHAEMVGRAADHAMVVVDLPFPDGQLDLLHSVRCGARVLKETQCHAVKLEGGAEQAERIEAMVGAGIPVMAHIGLRPQNIHVEGGYRLQRDIERLVADAKAAEAAGAFTVLIECVPSEAAAAITDAVKVPTIGIGAGRDVSGQVLVTHDILGLTSGYTPKFTRLFADVGNTIREAAKSYCDEVKAASFPSDAESFE.

Positions 52 and 91 each coordinate Mg(2+). Residues 52 to 53 (DT), Asp91, and Lys121 contribute to the 3-methyl-2-oxobutanoate site. Glu123 provides a ligand contact to Mg(2+). Glu186 acts as the Proton acceptor in catalysis.

This sequence belongs to the PanB family. In terms of assembly, homodecamer; pentamer of dimers. Requires Mg(2+) as cofactor.

The protein localises to the cytoplasm. The enzyme catalyses 3-methyl-2-oxobutanoate + (6R)-5,10-methylene-5,6,7,8-tetrahydrofolate + H2O = 2-dehydropantoate + (6S)-5,6,7,8-tetrahydrofolate. It participates in cofactor biosynthesis; (R)-pantothenate biosynthesis; (R)-pantoate from 3-methyl-2-oxobutanoate: step 1/2. Catalyzes the reversible reaction in which hydroxymethyl group from 5,10-methylenetetrahydrofolate is transferred onto alpha-ketoisovalerate to form ketopantoate. The polypeptide is 3-methyl-2-oxobutanoate hydroxymethyltransferase (Rhodopirellula baltica (strain DSM 10527 / NCIMB 13988 / SH1)).